A 199-amino-acid polypeptide reads, in one-letter code: Recombination protein RecR (199 aa).

A C4-type zinc finger spans residues 58-73 (CQRCNNFSEEAVCQRC). Positions 81 to 176 (ATLCVVEMPA…KVSRISRGVP (96 aa)) constitute a Toprim domain.

This sequence belongs to the RecR family.

In terms of biological role, may play a role in DNA repair. It seems to be involved in an RecBC-independent recombinational process of DNA repair. It may act with RecF and RecO. This Azoarcus sp. (strain BH72) protein is Recombination protein RecR.